We begin with the raw amino-acid sequence, 450 residues long: Probable 1,4-beta-D-glucan cellobiohydrolase C (450 aa).

Residues Met1–Ala19 form the signal peptide. The 36-residue stretch at Gln20 to Ile55 folds into the CBM1 domain. Intrachain disulfides connect Cys27/Cys44 and Cys38/Cys54. The interval Thr59–Thr90 is thr-rich linker. The tract at residues Thr63–Val89 is disordered. The segment at Ala91–Phe450 is catalytic. Residue Asp180 is part of the active site. Disulfide bonds link Cys181/Cys240 and Cys372/Cys419. Residue Asp226 is the Proton donor of the active site. Asp405 acts as the Nucleophile in catalysis. Asn409 carries N-linked (GlcNAc...) asparagine glycosylation.

This sequence belongs to the glycosyl hydrolase 6 (cellulase B) family.

The protein localises to the secreted. The catalysed reaction is Hydrolysis of (1-&gt;4)-beta-D-glucosidic linkages in cellulose and cellotetraose, releasing cellobiose from the non-reducing ends of the chains.. Functionally, the biological conversion of cellulose to glucose generally requires three types of hydrolytic enzymes: (1) Endoglucanases which cut internal beta-1,4-glucosidic bonds; (2) Exocellobiohydrolases that cut the disaccharide cellobiose from the non-reducing end of the cellulose polymer chain; (3) Beta-1,4-glucosidases which hydrolyze the cellobiose and other short cello-oligosaccharides to glucose. This Neosartorya fischeri (strain ATCC 1020 / DSM 3700 / CBS 544.65 / FGSC A1164 / JCM 1740 / NRRL 181 / WB 181) (Aspergillus fischerianus) protein is Probable 1,4-beta-D-glucan cellobiohydrolase C (cbhC).